A 457-amino-acid chain; its full sequence is Protein translocase subunit SecY (457 aa).

Over 1–20 (MGVIDVLAAVGERFPAVRKP) the chain is Cytoplasmic. The helical transmembrane segment at 21 to 47 (ERKPTLYRRLAWTGVILVLYFIMSNIP) threads the bilayer. Topologically, residues 48-59 (LYGIPPQNIGGQ) are extracellular. The helical intramembrane region spans 60–67 (VDLQRIIF). A discontinuously helical transmembrane segment spans residues 60–88 (VDLQRIIFASSAGTLMELGIGPIVTASLI). An intramembrane segment occupies 68–79 (ASSAGTLMELGI). Residues 80–88 (GPIVTASLI) constitute an intramembrane region (helical). The Cytoplasmic portion of the chain corresponds to 89-109 (IQVLVGAKIIKLDLADPEGRR). A helical membrane pass occupies residues 110–134 (KFTSAQKVLALAFAALEAVAFTVGG). Residues 135 to 146 (RYWVGTAIEPGP) are Extracellular-facing. The chain crosses the membrane as a helical span at residues 147 to 171 (LDYALVSLQLFLGALLVIYFDEVMQ). Over 172–178 (KGWGIGS) the chain is Cytoplasmic. A helical membrane pass occupies residues 179–197 (AISLFILAGVAQGVVWSIF). Residues 198–229 (GTIPGVAQDYGLVPAIISNPDLTLLARPNGFP) are Extracellular-facing. A helical transmembrane segment spans residues 230-251 (DLTGFFTTLAAIILLVYLQAMR). Residues 252–276 (VEIPITSERFKGIRSRVPLQFIYVT) are Cytoplasmic-facing. A helical transmembrane segment spans residues 277–298 (NIPILLVGILVSDLLLVQRLLA). Residues 299-332 (DYLGVESRAYQIYSSIVYYLSPPRGVVQSIADPV) are Extracellular-facing. A helical transmembrane segment spans residues 333-352 (KTAVFIASWTVLSIVFGYMW). At 353 to 395 (VEIAGLNPREQAERLIKGGLAIPGMRSDPRVLERVLRRYIYPL) the chain is on the cytoplasmic side. A helical transmembrane segment spans residues 396–414 (TFLSSLIVAALVIVADIFG). Topologically, residues 415–417 (AYG) are extracellular. The chain crosses the membrane as a helical span at residues 418-432 (TGTGLLLAVGIINQY). The Cytoplasmic portion of the chain corresponds to 433 to 457 (YAMITRERALETYPLLRRILGEEVV).

It belongs to the SecY/SEC61-alpha family. As to quaternary structure, component of the Sec protein translocase complex. Heterotrimer consisting of alpha (SecY), beta (SecG) and gamma (SecE) subunits. The heterotrimers can form oligomers, although 1 heterotrimer is thought to be able to translocate proteins. Interacts with the ribosome. May interact with SecDF, and other proteins may be involved.

It localises to the cell membrane. Its function is as follows. The central subunit of the protein translocation channel SecYEG. Consists of two halves formed by TMs 1-5 and 6-10. These two domains form a lateral gate at the front which open onto the bilayer between TMs 2 and 7, and are clamped together by SecE at the back. The channel is closed by both a pore ring composed of hydrophobic SecY resides and a short helix (helix 2A) on the extracellular side of the membrane which forms a plug. The plug probably moves laterally to allow the channel to open. The ring and the pore may move independently. The polypeptide is Protein translocase subunit SecY (Aeropyrum pernix (strain ATCC 700893 / DSM 11879 / JCM 9820 / NBRC 100138 / K1)).